We begin with the raw amino-acid sequence, 307 residues long: MGTGLSLSPSYRKATLFEDGAATVGHYTAVQNSKNAKDKNLKRHSIISVLPWKRIVAVSAKKKNSKKGQPNSSYQNNITHLNNENLKKSLSCANLSTFAQPPPAQPPAPPANQLSGSQTGVSSSVKKAPHPSVTSAGTPKRVIVQASTSELLRCLGEFLCRRCYRLKHLSPTDPVLWLRSVDRSLLLQGWQDQGFITPANVVFLYMLCRDVISSEVGSDHELQAVLLTCLYLSYSYVGNEISYPLKPFLVESCKEAFWDRCLSVINLMSSKMLQINADPHYFTQAFSDLKNESGQEDKKRLLLGLDR.

Position 8 is a phosphoserine; by CDK5 (S8). The disordered stretch occupies residues 96–136 (STFAQPPPAQPPAPPANQLSGSQTGVSSSVKKAPHPSVTSA). The span at 100–110 (QPPPAQPPAPP) shows a compositional bias: pro residues. A compositionally biased stretch (polar residues) spans 112–125 (NQLSGSQTGVSSSV). Phosphothreonine; by CDK5 is present on T138.

Belongs to the cyclin-dependent kinase 5 activator family. In terms of assembly, heterodimer composed of a catalytic subunit CDK5 and a regulatory subunit CDK5R1 (p25) and macromolecular complex composed of at least CDK5, CDK5R1 (p35) and CDK5RAP1 or CDK5RAP2 or CDK5RAP3. Only the heterodimer shows kinase activity. Interacts with EPHA4 and NGEF; may mediate the activation of NGEF by EPHA4. Interacts with RASGRF2. The complex p35/CDK5 interacts with CLOCK. The p35 form is proteolytically cleaved by calpain, giving rise to the p25 form. P35 has a 5 to 10 fold shorter half-life compared to p25. The conversion results in deregulation of the CDK5 kinase: p25/CDK5 kinase displays an increased and altered tau phosphorylation in comparison to the p35/CDK5 kinase in vivo. Post-translationally, myristoylated. A proper myristoylation signal is essential for the proper distribution of p35. In terms of processing, phosphorylation at Ser-8 and Thr-138 by CDK5 prevents calpain-mediated proteolysis. Ubiquitinated, leading to its degradation: degradation of p35 by proteasome results in down-regulation of CDK5 activity. During this process, CDK5 phosphorylates p35 and induces its ubiquitination and subsequent degradation. Ubiquitinated by the CRL2(FEM1B) complex, which recognizes the -Gly-Leu-Asp-Arg C-degron at the C-terminus, leading to its degradation. Brain and neuron specific.

The protein resides in the cell membrane. The protein localises to the cell projection. It is found in the neuron projection. It localises to the nucleus. Its subcellular location is the cytoplasm. The protein resides in the perinuclear region. The protein localises to the perikaryon. Its function is as follows. p35 is a neuron specific activator of CDK5. The complex p35/CDK5 is required for neurite outgrowth and cortical lamination. Involved in dendritic spine morphogenesis by mediating the EFNA1-EPHA4 signaling. Activator of TPKII. The complex p35/CDK5 participates in the regulation of the circadian clock by modulating the function of CLOCK protein: phosphorylates CLOCK at 'Thr-451' and 'Thr-461' and regulates the transcriptional activity of the CLOCK-BMAL1 heterodimer in association with altered stability and subcellular distribution. This chain is Cyclin-dependent kinase 5 activator 1 (CDK5R1), found in Spermophilus citellus (European ground squirrel).